Reading from the N-terminus, the 142-residue chain is Large ribosomal subunit protein uL11 (142 aa).

The protein belongs to the universal ribosomal protein uL11 family. As to quaternary structure, part of the ribosomal stalk of the 50S ribosomal subunit. Interacts with L10 and the large rRNA to form the base of the stalk. L10 forms an elongated spine to which L12 dimers bind in a sequential fashion forming a multimeric L10(L12)X complex. One or more lysine residues are methylated.

Functionally, forms part of the ribosomal stalk which helps the ribosome interact with GTP-bound translation factors. In Rhodopseudomonas palustris (strain BisB18), this protein is Large ribosomal subunit protein uL11.